The following is a 446-amino-acid chain: N-succinylarginine dihydrolase (446 aa).

Substrate contacts are provided by residues 19 to 28 (AGLSFGNEAS), Asn-110, and 137 to 138 (HR). Residue Glu-174 is part of the active site. Arg-213 provides a ligand contact to substrate. His-249 is an active-site residue. Substrate is bound by residues Asp-251 and Asn-364. Cys-370 (nucleophile) is an active-site residue.

It belongs to the succinylarginine dihydrolase family. Homodimer.

The enzyme catalyses N(2)-succinyl-L-arginine + 2 H2O + 2 H(+) = N(2)-succinyl-L-ornithine + 2 NH4(+) + CO2. Its pathway is amino-acid degradation; L-arginine degradation via AST pathway; L-glutamate and succinate from L-arginine: step 2/5. Functionally, catalyzes the hydrolysis of N(2)-succinylarginine into N(2)-succinylornithine, ammonia and CO(2). The polypeptide is N-succinylarginine dihydrolase (Serratia proteamaculans (strain 568)).